A 240-amino-acid chain; its full sequence is 1-(5-phosphoribosyl)-5-[(5-phosphoribosylamino)methylideneamino] imidazole-4-carboxamide isomerase (240 aa).

Residue D8 is the Proton acceptor of the active site. D130 acts as the Proton donor in catalysis.

The protein belongs to the HisA/HisF family.

Its subcellular location is the cytoplasm. The enzyme catalyses 1-(5-phospho-beta-D-ribosyl)-5-[(5-phospho-beta-D-ribosylamino)methylideneamino]imidazole-4-carboxamide = 5-[(5-phospho-1-deoxy-D-ribulos-1-ylimino)methylamino]-1-(5-phospho-beta-D-ribosyl)imidazole-4-carboxamide. It functions in the pathway amino-acid biosynthesis; L-histidine biosynthesis; L-histidine from 5-phospho-alpha-D-ribose 1-diphosphate: step 4/9. The chain is 1-(5-phosphoribosyl)-5-[(5-phosphoribosylamino)methylideneamino] imidazole-4-carboxamide isomerase from Flavobacterium johnsoniae (strain ATCC 17061 / DSM 2064 / JCM 8514 / BCRC 14874 / CCUG 350202 / NBRC 14942 / NCIMB 11054 / UW101) (Cytophaga johnsonae).